A 1802-amino-acid polypeptide reads, in one-letter code: Protein TIC 214 (1802 aa).

Helical transmembrane passes span Ile19 to Gly39, Phe68 to Leu88, Pro91 to His111, Val133 to Leu153, Val176 to Ile196, and Ile227 to Ile247.

It belongs to the TIC214 family. In terms of assembly, part of the Tic complex.

It localises to the plastid. The protein localises to the chloroplast inner membrane. Involved in protein precursor import into chloroplasts. May be part of an intermediate translocation complex acting as a protein-conducting channel at the inner envelope. The polypeptide is Protein TIC 214 (Nasturtium officinale (Watercress)).